The sequence spans 364 residues: Histidinol-phosphate aminotransferase (364 aa).

N6-(pyridoxal phosphate)lysine is present on Lys220.

It belongs to the class-II pyridoxal-phosphate-dependent aminotransferase family. Histidinol-phosphate aminotransferase subfamily. In terms of assembly, homodimer. Pyridoxal 5'-phosphate is required as a cofactor.

It carries out the reaction L-histidinol phosphate + 2-oxoglutarate = 3-(imidazol-4-yl)-2-oxopropyl phosphate + L-glutamate. It participates in amino-acid biosynthesis; L-histidine biosynthesis; L-histidine from 5-phospho-alpha-D-ribose 1-diphosphate: step 7/9. In Stenotrophomonas maltophilia (strain R551-3), this protein is Histidinol-phosphate aminotransferase.